The following is a 565-amino-acid chain: Ubiquitin carboxyl-terminal hydrolase 21 (565 aa).

Composition is skewed to basic and acidic residues over residues 1–14 (MPQASEHRLGRTRE) and 58–70 (PPDERLKKLDLGR). The tract at residues 1–128 (MPQASEHRLG…LRPMGIALGG (128 aa)) is disordered. The span at 71–81 (GRTSGSRPRGP) shows a compositional bias: low complexity. The segment covering 104-116 (SRTNLTRSKSVSS) has biased composition (polar residues). The short motif at 134 to 152 (ELGAALSRLALRPEPPTLR) is the Nuclear export signal element. The USP domain maps to 212-558 (VGLRNLGNTC…EGYVLFYQLM (347 aa)). Catalysis depends on C221, which acts as the Nucleophile. The tract at residues 324–347 (APPILASGPVPSPPRRGGALHEEP) is disordered. Zn(2+)-binding residues include C384, C387, C437, and C440. H518 (proton acceptor) is an active-site residue.

This sequence belongs to the peptidase C19 family. USP21 subfamily. Interacts with BEND3.

It localises to the cytoplasm. It is found in the nucleus. The catalysed reaction is Thiol-dependent hydrolysis of ester, thioester, amide, peptide and isopeptide bonds formed by the C-terminal Gly of ubiquitin (a 76-residue protein attached to proteins as an intracellular targeting signal).. In terms of biological role, deubiquitinates histone H2A, a specific tag for epigenetic transcriptional repression, thereby acting as a coactivator. Deubiquitination of histone H2A releaves the repression of di- and trimethylation of histone H3 at 'Lys-4', resulting in regulation of transcriptional initiation. Regulates gene expression via histone H2A deubiquitination. Deubiquitinates BAZ2A/TIP5 leading to its stabilization. Also capable of removing NEDD8 from NEDD8 conjugates but has no effect on Sentrin-1 conjugates. Also acts as a negative regulator of the ribosome quality control (RQC) by mediating deubiquitination of 40S ribosomal proteins RPS10/eS10 and RPS20/uS10, thereby antagonizing ZNF598-mediated 40S ubiquitination. The chain is Ubiquitin carboxyl-terminal hydrolase 21 (Usp21) from Rattus norvegicus (Rat).